We begin with the raw amino-acid sequence, 310 residues long: GPN-loop GTPase 2 (310 aa).

Ala2 carries the post-translational modification N-acetylalanine. Residue 19 to 24 (GSGKTT) coordinates GTP. A Gly-Pro-Asn (GPN)-loop; involved in dimer interface motif is present at residues 76-78 (GPN). 178–181 (SKMD) lines the GTP pocket.

It belongs to the GPN-loop GTPase family. As to quaternary structure, heterodimers with GPN1 or GPN3. Binds to RNA polymerase II (RNAPII).

Functionally, small GTPase required for proper localization of RNA polymerase II and III (RNAPII and RNAPIII). May act at an RNAP assembly step prior to nuclear import. The polypeptide is GPN-loop GTPase 2 (Homo sapiens (Human)).